The chain runs to 358 residues: Trace amine-associated receptor 7b (358 aa).

The Extracellular portion of the chain corresponds to 1–47; that stretch reads MATDNDSFPWDQDSILSSDMFSATSTELCYENLNRSCVRSPYSPGPR. Asn5 and Asn34 each carry an N-linked (GlcNAc...) asparagine glycan. 2 disulfide bridges follow: Cys37–Cys201 and Cys120–Cys205. Residues 48–68 form a helical membrane-spanning segment; it reads LILYAVFGFGAALAVCGNLLV. Residues 69–83 are Cytoplasmic-facing; sequence MTSILHFRQLHSPAN. A helical membrane pass occupies residues 84-104; that stretch reads FLVVSLACADFLVGLTVMPFS. The Extracellular portion of the chain corresponds to 105 to 121; it reads TVRSVEGCWYFGESYCK. The helical transmembrane segment at 122–143 threads the bilayer; the sequence is LHTCFDVSFCYCSIFHLCFISV. Over 144–166 the chain is Cytoplasmic; the sequence is DRYIAVSDPLTYPTRFTAFVSGK. A helical membrane pass occupies residues 167–187; the sequence is CITFSWLLSTIYGFSLLYTGA. Residues 188 to 212 lie on the Extracellular side of the membrane; it reads NEAGLEDLVSALTCVGGCQLAVNQS. Asn210 carries an N-linked (GlcNAc...) asparagine glycan. A helical membrane pass occupies residues 213-233; it reads WVFINFLLFLIPTLVMITVYS. Over 234 to 274 the chain is Cytoplasmic; it reads KIFLIAKQQAQNIEKMSKQTARASDSYKDRVAKRERKAAKT. Residues 275–295 traverse the membrane as a helical segment; the sequence is LGIAVAAFLLSWLPYFIDSII. Over 296-309 the chain is Extracellular; the sequence is DAFLGFITPTYVYE. The helical transmembrane segment at 310–333 threads the bilayer; sequence ILVWIAYYNSAMNPLIYAFFYPWF. Over 334–358 the chain is Cytoplasmic; sequence RKAIKLIVSGKVLRENSSTTNLFPE.

This sequence belongs to the G-protein coupled receptor 1 family. In terms of tissue distribution, specifically expressed in neurons of the olfactory epithelium.

It localises to the cell membrane. Its function is as follows. Olfactory receptor specific for N,N-dimethylalkylamines trace amines, such as N,N-dimethylcyclohexylamine. Trace amine compounds are enriched in animal body fluids and act on trace amine-associated receptors (TAARs) to elicit both intraspecific and interspecific innate behaviors. Ligand-binding causes a conformation change that triggers signaling via G(s)-class of G alpha proteins (GNAL or GNAS). The sequence is that of Trace amine-associated receptor 7b from Mus musculus (Mouse).